Here is a 213-residue protein sequence, read N- to C-terminus: Cytochrome b6 (213 aa).

Residues 30–50 traverse the membrane as a helical segment; it reads IFYCLGGLTLLAFLVQCVTGL. Cys33 is a binding site for heme c. His84 and His98 together coordinate heme b. 3 consecutive transmembrane segments (helical) span residues 88-108, 114-134, and 184-204; these read ANLMILLVFLHMLRVYYTGSF, LNWLAGCFLLVLSLGLAFTGY, and LHVMILPLVTIGFLVAHFIMI. Heme b contacts are provided by His185 and His200.

The protein belongs to the cytochrome b family. PetB subfamily. As to quaternary structure, the subunits of the cytochrome bc complex are a Rieske Fe-S protein (PetC), cytochrome b6 (PetB), subunit IV (PetD), and a diheme cytochrome c (PetX). It depends on heme b as a cofactor. Heme c serves as cofactor.

The protein resides in the cell membrane. In terms of biological role, component of the cytochrome bc complex which donates electrons to the photosynthetic reaction center. This chain is Cytochrome b6, found in Heliobacterium mobile (Heliobacillus mobilis).